A 153-amino-acid polypeptide reads, in one-letter code: Aspartate carbamoyltransferase regulatory chain (153 aa).

Residues C109, C114, C138, and C141 each contribute to the Zn(2+) site.

This sequence belongs to the PyrI family. Contains catalytic and regulatory chains. It depends on Zn(2+) as a cofactor.

Involved in allosteric regulation of aspartate carbamoyltransferase. The protein is Aspartate carbamoyltransferase regulatory chain of Cronobacter sakazakii (strain ATCC BAA-894) (Enterobacter sakazakii).